The sequence spans 139 residues: Large ribosomal subunit protein uL16 (139 aa).

It belongs to the universal ribosomal protein uL16 family. In terms of assembly, part of the 50S ribosomal subunit.

Its function is as follows. Binds 23S rRNA and is also seen to make contacts with the A and possibly P site tRNAs. This is Large ribosomal subunit protein uL16 from Microcystis aeruginosa (strain NIES-843 / IAM M-2473).